The primary structure comprises 271 residues: GATA transcription factor 19 (271 aa).

A disordered region spans residues 1-23; the sequence is MAAEPPADGRDPPADDGAAGDGA. One can recognise a Tify domain in the interval 33-68; it reads LSAASEQLTLVYQGEVYVFDPVPPQKVQAVLLVLGG. The region spanning 95-137 is the CCT domain; that stretch reads RVASLMRFREKRKERCFDKKIRYSVRKEVAQKMKRRKGQFAGR. The GATA-type zinc-finger motif lies at 166-193; the sequence is CQNCGISSRLTPAMRRGPAGPRSLCNAC. The segment at 238-271 is disordered; that stretch reads NQTTMKTDTEMVPEQEQKADVLPPTKEEDSMATS. Residues 252–271 are compositionally biased toward basic and acidic residues; that stretch reads QEQKADVLPPTKEEDSMATS.

It belongs to the type IV zinc-finger family. Class C subfamily.

The protein resides in the nucleus. Transcriptional activator that specifically binds 5'-GATA-3' or 5'-GAT-3' motifs within gene promoters. The polypeptide is GATA transcription factor 19 (Oryza sativa subsp. japonica (Rice)).